Reading from the N-terminus, the 849-residue chain is Disks large homolog 3 (849 aa).

A disordered region spans residues 32–101 (DWQVPDPYGP…GKNTPKLNGS (70 aa)). The span at 41 to 53 (PSGGNGASSGYGG) shows a compositional bias: gly residues. Polar residues predominate over residues 57–69 (QTLPSQAGATPTP). 3 consecutive PDZ domains span residues 149 to 235 (EIVL…VRRR), 244 to 330 (EVNL…VAKP), and 404 to 484 (KIIL…AQYR). Ser-157 bears the Phosphoserine mark. Positions 519–589 (KRSLYVRALF…PSKKRVEKKE (71 aa)) constitute an SH3 domain. A Guanylate kinase-like domain is found at 659-834 (ARPVIILGPM…IYNKIKQIIE (176 aa)). Tyr-705 carries the post-translational modification Phosphotyrosine.

This sequence belongs to the MAGUK family. As to quaternary structure, interacts through its PDZ domains with NETO1 and APC. Interacts through its first two PDZ domains with ERBB4. Interacts through its third PDZ domain with NLGN1, and probably with NLGN2 and NLGN3. Interacts through its PDZ domains with GRIN2B and SYNGAP1. Interacts through its guanylate kinase-like domain with DLGAP1, DLGAP2, DLGAP3 and DLGAP4. Interacts with FRMPD4 (via C-terminus). Interacts with LRFN2. Interacts with LRFN1 and LRFN4. Interacts with FLTP. Interacts with DGKI (via PDZ-binding motif).

In terms of biological role, required for learning most likely through its role in synaptic plasticity following NMDA receptor signaling. This is Disks large homolog 3 (Dlg3) from Rattus norvegicus (Rat).